Reading from the N-terminus, the 224-residue chain is Protein GrpE (224 aa).

The disordered stretch occupies residues 27–77; that stretch reads NQASEDIDQENQSEVVDDTTENEDASEEVYEEDTASEDGSKEKKSFFKKKE. The span at 31-62 shows a compositional bias: acidic residues; sequence EDIDQENQSEVVDDTTENEDASEEVYEEDTAS.

This sequence belongs to the GrpE family. In terms of assembly, homodimer.

It localises to the cytoplasm. Functionally, participates actively in the response to hyperosmotic and heat shock by preventing the aggregation of stress-denatured proteins, in association with DnaK and GrpE. It is the nucleotide exchange factor for DnaK and may function as a thermosensor. Unfolded proteins bind initially to DnaJ; upon interaction with the DnaJ-bound protein, DnaK hydrolyzes its bound ATP, resulting in the formation of a stable complex. GrpE releases ADP from DnaK; ATP binding to DnaK triggers the release of the substrate protein, thus completing the reaction cycle. Several rounds of ATP-dependent interactions between DnaJ, DnaK and GrpE are required for fully efficient folding. The sequence is that of Protein GrpE from Lachnoclostridium phytofermentans (strain ATCC 700394 / DSM 18823 / ISDg) (Clostridium phytofermentans).